The following is a 213-amino-acid chain: uncharacterized protein (213 aa).

3 helical membrane passes run 26 to 46 (FINF…GLKV), 112 to 132 (ASYI…AGIW), and 136 to 156 (AGLA…SFLI).

The protein localises to the cell membrane. This is an uncharacterized protein from Haemophilus influenzae (strain ATCC 51907 / DSM 11121 / KW20 / Rd).